Reading from the N-terminus, the 126-residue chain is C-type natriuretic peptide (126 aa).

The N-terminal stretch at 1–23 is a signal peptide; that stretch reads MHLSQLIACALLLALLSLRPSEA. Residues 19-71 form a disordered region; that stretch reads RPSEAKPGTPPKVPRTPPGEELAEPQAAGGNQKKGDKTPGGGGANLKGDRSRL. Residues 24–73 constitute a propeptide that is removed on maturation; sequence KPGTPPKVPRTPPGEELAEPQAAGGNQKKGDKTPGGGGANLKGDRSRLLR. The segment covering 26-35 has biased composition (pro residues); that stretch reads GTPPKVPRTP. The cysteines at positions 110 and 126 are disulfide-linked.

Belongs to the natriuretic peptide family. In terms of processing, degraded by IDE (in vitro). Expressed exclusively in brain.

It is found in the secreted. Functionally, hormone which plays a role in endochondral ossification through regulation of cartilaginous growth plate chondrocytes proliferation and differentiation. May also be vasoactive and natriuretic. Acts by specifically binding and stimulating NPR2 to produce cGMP. Binds the clearance receptor NPR3. The polypeptide is C-type natriuretic peptide (Nppc) (Rattus norvegicus (Rat)).